The sequence spans 340 residues: DNA-directed RNA polymerase subunit alpha (340 aa).

Positions 1–236 are alpha N-terminal domain (alpha-NTD); the sequence is MLSLSKNWNT…EQLQLFISFE (236 aa). Residues 251–340 are alpha C-terminal domain (alpha-CTD); it reads FSPYLLKRVD…LSKRYEDSYN (90 aa).

It belongs to the RNA polymerase alpha chain family. As to quaternary structure, homodimer. The RNAP catalytic core consists of 2 alpha, 1 beta, 1 beta' and 1 omega subunit. When a sigma factor is associated with the core the holoenzyme is formed, which can initiate transcription.

The enzyme catalyses RNA(n) + a ribonucleoside 5'-triphosphate = RNA(n+1) + diphosphate. Functionally, DNA-dependent RNA polymerase catalyzes the transcription of DNA into RNA using the four ribonucleoside triphosphates as substrates. The polypeptide is DNA-directed RNA polymerase subunit alpha (Rickettsia akari (strain Hartford)).